Here is a 301-residue protein sequence, read N- to C-terminus: ATP synthase gamma chain (301 aa).

It belongs to the ATPase gamma chain family. As to quaternary structure, F-type ATPases have 2 components, CF(1) - the catalytic core - and CF(0) - the membrane proton channel. CF(1) has five subunits: alpha(3), beta(3), gamma(1), delta(1), epsilon(1). CF(0) has three main subunits: a, b and c.

Its subcellular location is the cell inner membrane. Functionally, produces ATP from ADP in the presence of a proton gradient across the membrane. The gamma chain is believed to be important in regulating ATPase activity and the flow of protons through the CF(0) complex. This Helicobacter pylori (strain ATCC 700392 / 26695) (Campylobacter pylori) protein is ATP synthase gamma chain.